The chain runs to 209 residues: Kynurenine formamidase (209 aa).

Tryptophan 20 contacts substrate. Zn(2+) contacts are provided by histidine 50, histidine 54, and aspartate 56. Histidine 60 acts as the Proton donor/acceptor in catalysis. Positions 161 and 173 each coordinate Zn(2+).

Belongs to the Cyclase 1 superfamily. KynB family. Homodimer. Requires Zn(2+) as cofactor.

The catalysed reaction is N-formyl-L-kynurenine + H2O = L-kynurenine + formate + H(+). It functions in the pathway amino-acid degradation; L-tryptophan degradation via kynurenine pathway; L-kynurenine from L-tryptophan: step 2/2. Catalyzes the hydrolysis of N-formyl-L-kynurenine to L-kynurenine, the second step in the kynurenine pathway of tryptophan degradation. This chain is Kynurenine formamidase, found in Bacillus cereus (strain ZK / E33L).